Here is a 138-residue protein sequence, read N- to C-terminus: Venom allergen 2 (138 aa).

Residues 1–19 (MKSFVLATCLLGFAQIIYA) form the signal peptide. 3 disulfide bridges follow: C34–C57, C81–C94, and C101–C122.

Belongs to the ant venom allergen 2/4 family. Homodimer; disulfide-linked. As to expression, expressed by the venom gland.

The protein resides in the secreted. The sequence is that of Venom allergen 2 from Solenopsis invicta (Red imported fire ant).